We begin with the raw amino-acid sequence, 361 residues long: Probable pectinesterase 49 (361 aa).

Residues 1–22 (MGYISLALVALLVFFASPVVLA) form the signal peptide. Asn128 carries an N-linked (GlcNAc...) asparagine glycan. Gln174 lines the substrate pocket. Asp197 acts as the Proton donor in catalysis. Asp218 functions as the Nucleophile in the catalytic mechanism. The substrate site is built by Arg275 and Trp277.

This sequence belongs to the pectinesterase family. In terms of tissue distribution, expressed in flower buds.

Its subcellular location is the secreted. It localises to the cell wall. It catalyses the reaction [(1-&gt;4)-alpha-D-galacturonosyl methyl ester](n) + n H2O = [(1-&gt;4)-alpha-D-galacturonosyl](n) + n methanol + n H(+). Its pathway is glycan metabolism; pectin degradation; 2-dehydro-3-deoxy-D-gluconate from pectin: step 1/5. Functionally, acts in the modification of cell walls via demethylesterification of cell wall pectin. This chain is Probable pectinesterase 49 (PME49), found in Arabidopsis thaliana (Mouse-ear cress).